A 155-amino-acid chain; its full sequence is Deoxyuridine 5'-triphosphate nucleotidohydrolase (155 aa).

Substrate-binding positions include 74–76 (RSG), Asn87, and 91–93 (TID).

Belongs to the dUTPase family. Requires Mg(2+) as cofactor.

It catalyses the reaction dUTP + H2O = dUMP + diphosphate + H(+). It participates in pyrimidine metabolism; dUMP biosynthesis; dUMP from dCTP (dUTP route): step 2/2. Functionally, this enzyme is involved in nucleotide metabolism: it produces dUMP, the immediate precursor of thymidine nucleotides and it decreases the intracellular concentration of dUTP so that uracil cannot be incorporated into DNA. The protein is Deoxyuridine 5'-triphosphate nucleotidohydrolase of Cereibacter sphaeroides (strain KD131 / KCTC 12085) (Rhodobacter sphaeroides).